Here is a 111-residue protein sequence, read N- to C-terminus: Large ribosomal subunit protein eL31 (111 aa).

This sequence belongs to the eukaryotic ribosomal protein eL31 family.

This chain is Large ribosomal subunit protein eL31 (RPL31), found in Encephalitozoon cuniculi (strain GB-M1) (Microsporidian parasite).